A 122-amino-acid polypeptide reads, in one-letter code: Putative syntaxin 6 (122 aa).

Topologically, residues 1 to 100 (MSNYRYSKLN…AKLTHLEDES (100 aa)) are cytoplasmic. A t-SNARE coiled-coil homology domain is found at 31-93 (EQIIQEQDDE…DTAMKKMAKL (63 aa)). Residues 101-121 (SQCKMIMVLSALLFFLVFVLL) form a helical; Anchor for type IV membrane protein membrane-spanning segment. V122 is a topological domain (extracellular).

It belongs to the syntaxin family.

The protein resides in the membrane. In terms of biological role, SNARE promoting movement of transport vesicles to target membranes. Potentially functions in retrograde trafficking and in the endocytic recycling pathway. The polypeptide is Putative syntaxin 6 (syx-6) (Caenorhabditis elegans).